We begin with the raw amino-acid sequence, 212 residues long: Protein RER1C (212 aa).

Methionine 1 bears the N-acetylmethionine mark. 4 helical membrane-spanning segments follow: residues 55–75 (TVPH…IYIV), 82–102 (GFYI…IAFL), 135–155 (EFKF…MTFF), and 157–177 (VFDV…LFFL).

Belongs to the RER1 family.

It is found in the membrane. Its function is as follows. Involved in the retrieval of endoplasmic reticulum membrane proteins from the early Golgi compartment. In Arabidopsis thaliana (Mouse-ear cress), this protein is Protein RER1C (RER1C).